Consider the following 7079-residue polypeptide: Replicase polyprotein 1ab (7079 aa).

A CoV Nsp1 globular domain is found at Thr12–Gly127. The region spanning Glu148–Gly179 is the BetaCoV Nsp1 C-terminal domain. Residues Thr183–Arg456 form the CoV Nsp2 N-terminal domain. Zn(2+) is bound by residues Cys200, Cys231, His234, His236, Cys323, Cys326, Cys341, Cys344, Cys370, Cys373, His382, and Cys416. The interval Cys200 to His236 is C2H2. Residues Cys323–Cys344 are C4. Residues Cys370–Cys416 are C2HC. One can recognise a CoV Nsp2 middle domain in the interval Arg458–Met688. The region spanning Ile690 to Gly818 is the CoV Nsp2 C-terminal domain. A Ubiquitin-like 1 domain is found at Lys822–Glu930. Macro domains are found at residues Val1001–Leu1167, Lys1213–Lys1341, and Ile1349–Ser1476. The 67-residue stretch at Thr1478–Ser1544 folds into the DPUP domain. A Ubiquitin-like 2 domain is found at Val1548 to Val1603. A Peptidase C16 domain is found at Tyr1617 to Glu1881. The active-site For PL-PRO activity is the Cys1657. The Zn(2+) site is built by Cys1735, Cys1738, Cys1770, and Cys1772. Residues Cys1735 to Cys1772 form a C4-type zinc finger. Active-site for PL-PRO activity residues include His1818 and Asp1832. A Nucleic acid-binding domain is found at Pro1894 to Thr2004. Positions Pro2029–Asn2138 constitute a G2M domain. An HD1 region spans residues Leu2098–Trp2377. The chain crosses the membrane as a helical span at residues Leu2209–Val2229. Residues Thr2230–Asp2300 form the 3Ecto domain. Intrachain disulfides connect Cys2246-Cys2274 and Cys2265-Cys2271. 2 consecutive transmembrane segments (helical) span residues Trp2310–Met2330 and Met2357–Trp2377. Residues Lys2378 to Asp2468 are Y1. Residues Lys2378–Gly2746 form the CoV Nsp3 Y domain. Residues His2382, Cys2387, Cys2392, Cys2395, Cys2428, His2431, Cys2435, and Cys2438 each coordinate Zn(2+). Positions His2382 to Cys2395 are ZF1. Positions Cys2428–Cys2438 are ZF2. The tract at residues Gln2469–Val2563 is Y2. Residues Gln2469–Gly2746 are coV-Y. Residues Gly2564–Asp2645 are Y3. The interval Leu2646 to Gly2746 is Y4. A run of 7 helical transmembrane segments spans residues Leu2761 to Val2781, Pro2998 to Val3018, Ala3028 to Met3048, Val3060 to Ala3080, Phe3083 to Val3103, Trp3111 to Ile3131, and Val3148 to Leu3168. The HD2 stretch occupies residues Leu2761–Leu3168. The Nsp4C domain maps to Val3148–Gln3246. The Peptidase C30 domain maps to Ser3247–Gln3552. Catalysis depends on for 3CL-PRO activity residues His3287 and Cys3391. The next 7 membrane-spanning stretches (helical) occupy residues Phe3570–Tyr3590, Asn3592–Val3612, Phe3618–Met3638, Cys3665–Tyr3684, Val3691–Leu3710, Ile3734–Ile3754, and Ile3762–Leu3782. The interval Phe3570–Leu3782 is HD3. Residues Ser3843–Gln3925 enclose the RdRp Nsp7 cofactor domain. Residues Ala3926–Gln4123 form the RdRp Nsp8 cofactor domain. Residues Asn4124–Gln4236 form the Nsp9 ssRNA-binding domain. The ExoN/MTase coactivator domain occupies Ala4237–Gln4375. Zn(2+) is bound by residues Cys4310, Cys4313, His4319, Cys4326, Cys4353, Cys4356, Cys4364, and Cys4366. Zinc fingers lie at residues Cys4310–Cys4326 and Cys4353–Cys4366. In terms of domain architecture, NiRAN spans Phe4382 to Leu4636. Residues Asn4584 and Asp4593 each contribute to the Mn(2+) site. A Nsp12 Interface domain is found at Ile4641–Ser4739. His4670, Cys4676, Cys4681, Cys4685, and Cys4862 together coordinate Zn(2+). The 568-residue stretch at Arg4740 to Gln5307 folds into the Nsp12 RNA-dependent RNA polymerase domain. Residues Ser4742 to Ala4956 are rdRp Fingers N-ter. The tract at residues Thr4957–Pro4995 is rdRp Palm N-ter. The region spanning Pro4987–Gly5149 is the RdRp catalytic domain. Positions Lys4996 to Gly5054 are rdRp Fingers C-ter. Positions 5017, 5020, and 5021 each coordinate Zn(2+). The tract at residues Thr5055–Gln5190 is rdRp Palm C-ter. Active-site residues include Ser5134, Asp5135, and Asp5136. Residues His5191 to Gln5307 are rdRp Thumb. Residues Ala5308–Asp5420 form the CV ZBD domain. Positions 5312, 5315, 5323, 5326, 5333, 5336, 5340, 5346, 5357, 5362, 5379, and 5382 each coordinate Zn(2+). The 182-residue stretch at Asn5564–Leu5745 folds into the (+)RNA virus helicase ATP-binding domain. Residue Gly5589–Ser5596 coordinates ATP. The (+)RNA virus helicase C-terminal domain maps to Gly5746–Leu5915. In terms of domain architecture, ExoN spans Met5980–Val6195. Residues Asp5998, Glu6000, and Glu6099 contribute to the active site. Positions 6115, 6118, 6134, 6137, 6165, 6169, and 6172 each coordinate Zn(2+). Residues His6176 and Asp6181 contribute to the active site. Cys6187 provides a ligand contact to Zn(2+). Positions Tyr6204 to Gln6435 constitute an N7-MTase domain. Asp6239–Ala6245 serves as a coordination point for S-adenosyl-L-methionine. Positions Cys6322–Thr6336 are gpppA-binding. Zn(2+)-binding residues include Cys6360, Cys6381, Cys6392, and His6395. One can recognise a Nsp15 N-terminal oligomerization domain in the interval Ser6436 to Arg6496. The 126-residue stretch at Asn6497–Gln6622 folds into the AV-Nsp11N/CoV-Nsp15M domain. A NendoU domain is found at Lys6639 to Pro6778. Catalysis depends on residues His6669, His6684, Lys6724, Lys6827, Asp6911, Lys6951, and Glu6984. In terms of domain architecture, Nidovirus-type SAM-dependent 2'-O-MTase spans Ser6783–Val7077.

This sequence belongs to the coronaviruses polyprotein 1ab family. As to quaternary structure, interacts with host PHB and PHB2. In terms of assembly, interacts with papain-like protease nsp3 and non-structural protein 6. Monomer. Homodimer. Only the homodimer shows catalytic activity. As to quaternary structure, interacts with nsp8 and nsp12 to form the replication-transcription complex (RTC): nsp12, nsp7, two subunits of nsp8, and up to two subunits of nsp13. In terms of assembly, interacts with nsp7, nsp13 and nsp12 to form the replication-transcription complex (RTC): nsp12, nsp7, two subunits of nsp8, and up to two subunits of nsp13. Interacts with nsp12. As to quaternary structure, interacts with proofreading exoribonuclease nsp14 and 2'-O-methyltransferase nsp16; these interactions enhance nsp14 and nsp16 enzymatic activities. In terms of assembly, interacts with nsp7 and nsp8 to form the replication-transcription complex (RTC): nsp12, nsp7, two subunits of nsp8, and up to two subunits of nsp13. Interacts with nsp9. Interacts with nsp8 to form the replication-transcription complex (RTC): nsp12, nsp7, two subunits of nsp8, and up to two subunits of nsp13. It depends on Mn(2+) as a cofactor. Mg(2+) serves as cofactor. Post-translationally, specific enzymatic cleavages in vivo by its own proteases yield mature proteins. 3CL-PRO and PL-PRO proteinases are autocatalytically processed.

It is found in the host membrane. The protein resides in the host cytoplasm. The protein localises to the host perinuclear region. It localises to the host endoplasmic reticulum-Golgi intermediate compartment. It catalyses the reaction RNA(n) + a ribonucleoside 5'-triphosphate = RNA(n+1) + diphosphate. The catalysed reaction is ATP + H2O = ADP + phosphate + H(+). The enzyme catalyses Thiol-dependent hydrolysis of ester, thioester, amide, peptide and isopeptide bonds formed by the C-terminal Gly of ubiquitin (a 76-residue protein attached to proteins as an intracellular targeting signal).. It carries out the reaction a 5'-end (N(7)-methyl 5'-triphosphoguanosine)-ribonucleoside in mRNA + S-adenosyl-L-methionine = a 5'-end (N(7)-methyl 5'-triphosphoguanosine)-(2'-O-methyl-ribonucleoside) in mRNA + S-adenosyl-L-homocysteine + H(+). It catalyses the reaction uridylyl-uridylyl-ribonucleotide-RNA = a 3'-end uridylyl-2',3'-cyclophospho-uridine-RNA + a 5'-end dephospho-ribonucleoside-RNA. The catalysed reaction is a 5'-end diphospho-ribonucleoside in mRNA + GTP + H(+) = a 5'-end (5'-triphosphoguanosine)-ribonucleoside in mRNA + diphosphate. The enzyme catalyses a 5'-end (5'-triphosphoguanosine)-ribonucleoside in mRNA + S-adenosyl-L-methionine = a 5'-end (N(7)-methyl 5'-triphosphoguanosine)-ribonucleoside in mRNA + S-adenosyl-L-homocysteine. Functionally, the replicase polyprotein of coronaviruses is a multifunctional protein: it contains the activities necessary for the transcription of negative stranded RNA, leader RNA, subgenomic mRNAs and progeny virion RNA as well as proteinases responsible for the cleavage of the polyprotein into functional products. Its function is as follows. Inhibits host translation by interacting with the 40S ribosomal subunit. The nsp1-40S ribosome complex further induces an endonucleolytic cleavage near the 5'UTR of host mRNAs, targeting them for degradation. Viral mRNAs are not susceptible to nsp1-mediated endonucleolytic RNA cleavage thanks to the presence of a 5'-end leader sequence and are therefore protected from degradation. By suppressing host gene expression, nsp1 facilitates efficient viral gene expression in infected cells and evasion from host immune response. May play a role in the modulation of host cell survival signaling pathway by interacting with host PHB and PHB2. Indeed, these two proteins play a role in maintaining the functional integrity of the mitochondria and protecting cells from various stresses. In terms of biological role, responsible for the cleavages located at the N-terminus of the replicase polyprotein. In addition, PL-PRO possesses a deubiquitinating/deISGylating activity and processes both 'Lys-48'- and 'Lys-63'-linked polyubiquitin chains from cellular substrates. Participates together with nsp4 in the assembly of virally-induced cytoplasmic double-membrane vesicles necessary for viral replication. Antagonizes innate immune induction of type I interferon by blocking the phosphorylation, dimerization and subsequent nuclear translocation of host IRF3. Also prevents host NF-kappa-B signaling. Functionally, participates in the assembly of virally-induced cytoplasmic double-membrane vesicles necessary for viral replication. Its function is as follows. Cleaves the C-terminus of replicase polyprotein at 11 sites. Recognizes substrates containing the core sequence [ILMVF]-Q-|-[SGACN]. Also able to bind an ADP-ribose-1''-phosphate (ADRP). Plays a role in the initial induction of autophagosomes from host endoplasmic reticulum. Later, limits the expansion of these phagosomes that are no longer able to deliver viral components to lysosomes. In terms of biological role, forms a hexadecamer with nsp8 (8 subunits of each) that may participate in viral replication by acting as a primase. Alternatively, may synthesize substantially longer products than oligonucleotide primers. Functionally, forms a hexadecamer with nsp7 (8 subunits of each) that may participate in viral replication by acting as a primase. Alternatively, may synthesize substantially longer products than oligonucleotide primers. Its function is as follows. Forms a primer, NSP9-pU, which is utilized by the polymerase for the initiation of RNA chains. Interacts with ribosome signal recognition particle RNA (SRP). Together with NSP8, suppress protein integration into the cell membrane, thereby disrupting host immune defenses. Plays a pivotal role in viral transcription by stimulating both nsp14 3'-5' exoribonuclease and nsp16 2'-O-methyltransferase activities. Therefore plays an essential role in viral mRNAs cap methylation. In terms of biological role, RNA-directed RNA polymerase that catalyzes the transcription of viral genomic and subgenomic RNAs. Acts in complex with nsp7 and nsp8 to transcribe both the minus and positive strands of genomic RNA. The kinase-like NiRAN domain of NSP12 attaches one or more nucleotides to the amino terminus of NSP9, forming a covalent RNA-protein intermediate that serves as transcription/replication primer. Subgenomic RNAs (sgRNAs) are formed by discontinuous transcription: The polymerase has the ability to pause at transcription-regulating sequences (TRS) and jump to the leader TRS, resulting in a major deletion. This creates a series of subgenomic RNAs that are replicated, transcribed and translated. In addition, Nsp12 is a subunit of the viral RNA capping enzyme that catalyzes the RNA guanylyltransferase reaction for genomic and sub-genomic RNAs. Subsequently, the NiRAN domain transfers RNA to GDP, and forms the core cap structure GpppA-RNA. Functionally, multi-functional protein with a zinc-binding domain in N-terminus displaying RNA and DNA duplex-unwinding activities with 5' to 3' polarity. Activity of helicase is dependent on magnesium. Its function is as follows. Plays a role in viral RNA synthesis through two distinct activities. The N7-guanine methyltransferase activity plays a role in the formation of the cap structure GpppA-RNA. The proofreading exoribonuclease reduces the sensitivity of the virus to RNA mutagens during replication. This activity acts on both ssRNA and dsRNA in a 3'-5' direction. Plays a role in viral transcription/replication and prevents the simultaneous activation of host cell dsRNA sensors, such as MDA5/IFIH1, OAS, and PKR. Acts by degrading the 5'-polyuridines generated during replication of the poly(A) region of viral genomic and subgenomic RNAs. Catalyzes a two-step reaction in which a 2'3'-cyclic phosphate (2'3'-cP) is first generated by 2'-O transesterification, which is then hydrolyzed to a 3'-phosphate (3'-P). If not degraded, poly(U) RNA would hybridize with poly(A) RNA tails and activate host dsRNA sensors. In terms of biological role, methyltransferase that mediates mRNA cap 2'-O-ribose methylation to the 5'-cap structure of viral mRNAs. N7-methyl guanosine cap is a prerequisite for binding of nsp16. Therefore plays an essential role in viral mRNAs cap methylation which is essential to evade immune system. This chain is Replicase polyprotein 1ab (rep), found in Bat coronavirus 279/2005 (BtCoV).